The following is a 92-amino-acid chain: Putative phosphotransferase enzyme IIB component SgcB (92 aa).

Positions 1 to 92 (MKKILVACGT…KQQIKALLTQ (92 aa)) constitute a PTS EIIB type-2 domain. C8 serves as the catalytic Phosphocysteine intermediate.

The protein localises to the cytoplasm. In terms of biological role, the phosphoenolpyruvate-dependent sugar phosphotransferase system (sugar PTS), a major carbohydrate active -transport system, catalyzes the phosphorylation of incoming sugar substrates concomitantly with their translocation across the cell membrane. The sequence is that of Putative phosphotransferase enzyme IIB component SgcB (sgcB) from Escherichia coli (strain K12).